A 341-amino-acid polypeptide reads, in one-letter code: UDP-N-acetylenolpyruvoylglucosamine reductase (341 aa).

The FAD-binding PCMH-type domain maps to 15 to 185 (VTQSCLSLIE…TAVGLRLPKT (171 aa)). Arg161 is an active-site residue. Ser231 functions as the Proton donor in the catalytic mechanism. Glu327 is an active-site residue.

It belongs to the MurB family. The cofactor is FAD.

Its subcellular location is the cytoplasm. It catalyses the reaction UDP-N-acetyl-alpha-D-muramate + NADP(+) = UDP-N-acetyl-3-O-(1-carboxyvinyl)-alpha-D-glucosamine + NADPH + H(+). The protein operates within cell wall biogenesis; peptidoglycan biosynthesis. Cell wall formation. This chain is UDP-N-acetylenolpyruvoylglucosamine reductase, found in Shewanella oneidensis (strain ATCC 700550 / JCM 31522 / CIP 106686 / LMG 19005 / NCIMB 14063 / MR-1).